Reading from the N-terminus, the 139-residue chain is Protein GOS9 (139 aa).

One can recognise a Jacalin-type lectin domain in the interval 5-139 (LVKIGTWGGN…VDSIGVYVHI (135 aa)).

As to expression, expressed mainly in roots.

The sequence is that of Protein GOS9 (GOS9) from Oryza sativa subsp. indica (Rice).